The primary structure comprises 1318 residues: 1-phosphatidylinositol 4,5-bisphosphate phosphodiesterase classes I and II (1318 aa).

The PI-PLC X-box domain maps to 318–466 (DDMDQPMSHY…LRRKIIIKNK (149 aa)). Catalysis depends on residues H333 and H378. Substrate is bound by residues K464 and K466. The segment covering 466-481 (KKKHHHHHHHHHHKKP) has biased composition (basic residues). Disordered stretches follow at residues 466-489 (KKKH…TPAA) and 505-594 (QQVG…KETE). Composition is skewed to low complexity over residues 528–543 (ATGT…AGHA) and 554–563 (KDSTGSSDSD). Over residues 571–580 (LPNTTPNLPS) the composition is skewed to polar residues. The span at 585–594 (PPEKAQKETE) shows a compositional bias: basic and acidic residues. The PI-PLC Y-box domain occupies 599 to 715 (ISALVNYVQP…GYLLKPEFMR (117 aa)). The substrate site is built by S628 and R655. In terms of domain architecture, C2 spans 715–843 (RRSDRRLDPF…NLRSEVGQPI (129 aa)). Disordered stretches follow at residues 1080–1112 (LDLG…TQES) and 1296–1318 (GSHS…EMKT). Low complexity predominate over residues 1088–1107 (ESAAADAGEDLAGGSSSLDG).

In terms of tissue distribution, expressed in neuronal cell bodies of the optic lobe, central brain, and thoracic ganglia in adults, and the brain of larvae.

It carries out the reaction a 1,2-diacyl-sn-glycero-3-phospho-(1D-myo-inositol-4,5-bisphosphate) + H2O = 1D-myo-inositol 1,4,5-trisphosphate + a 1,2-diacyl-sn-glycerol + H(+). The production of the second messenger molecules diacylglycerol (DAG) and inositol 1,4,5-trisphosphate (IP3) is mediated by activated phosphatidylinositol-specific phospholipase C enzymes. This Drosophila melanogaster (Fruit fly) protein is 1-phosphatidylinositol 4,5-bisphosphate phosphodiesterase classes I and II (Plc21C).